The chain runs to 1059 residues: Pleckstrin homology domain-containing family M member 1 (1059 aa).

In terms of domain architecture, RUN spans 40–182 (TSEDGDANTM…LSFELSYKSA (143 aa)). Phosphoserine is present on Ser218. Disordered stretches follow at residues 218–244 (SLDS…RRDR), 272–334 (LQEN…TPMF), and 354–411 (SEEP…DQGS). 2 stretches are compositionally biased toward polar residues: residues 313 to 334 (SKAQ…TPMF) and 392 to 401 (GSTSDQQPSS). Phosphoserine occurs at positions 430, 433, and 488. Positions 536–627 (GLMKLGTVAR…WLDRVREALQ (92 aa)) constitute a PH 1 domain. Positions 634–640 (EEEWVNI) match the LIR motif. Positions 657–1059 (LPPYSALLPE…RKYQEQNTVS (403 aa)) are interaction with RAB7A. Residues 686 to 780 (DAIKESLLYL…WRDLVRKVLA (95 aa)) enclose the PH 2 domain. The Phorbol-ester/DAG-type zinc finger occupies 989 to 1043 (QHVYHCDLCTQRGFICQICHHQDIIFPFEFDTTVRCAECRTVFHQSCQAVVRKGC).

Interacts (via N- and C-terminus) with RAB7A (GTP-bound form). Simultaneously interacts with RAB7A and ARL8B; bringing about clustering and fusion of late endosomes and lysosomes. Interacts (via RUN domain) with ARL8B (GTP-bound form); the interaction is required for PLEKHM1 localization to lysosomes and for ARL8B function in delivery and degradation of endocytic and autophagic cargo in lysosomes. PLEKHM1 and PLEKHM2 compete for interaction with ARL8B. Interacts with ARL8A; the interaction is weaker than with ARL8B. Interacts with VPS41, VPS11, VPS18, VPS33A and VPS39; indicative for an association with the HOPS complex; the interactions with, at least, VPS41, VPS11, VPS18 and VPS33A require ARL8B. Interacts with GABARAP, GABARAPL, GABARAPL2, MAP1LC3A, MAP1LC3B and MAP1LC3C. Interacts with PAFAH1B. Interacts (via N- and C-terminus) with NDEL1. Interacts (via C-terminus) with MAP3K7. Interacts (via N- and C-terminus) with FAM98A. Interacts (via C-terminus) with DEF8; this interaction is weak but increased in a RAB7A-dependent manner. May interact with sialyl-lex-positive protein. As to expression, expressed in testis, skeletal muscle, lung, liver, spleen, brain, heart, kidney and bone. Weakly expressed in monocytes (at protein level).

The protein resides in the autolysosome membrane. It is found in the endosome membrane. Its subcellular location is the late endosome membrane. It localises to the lysosome membrane. Acts as a multivalent adapter protein that regulates Rab7-dependent and HOPS complex-dependent fusion events in the endolysosomal system and couples autophagic and the endocytic trafficking pathways. Acts as a dual effector of RAB7A and ARL8B that simultaneously binds these GTPases, bringing about clustering and fusion of late endosomes and lysosomes. Required for late stages of endolysosomal maturation, facilitating both endocytosis-mediated degradation of growth factor receptors and autophagosome clearance. Interaction with Arl8b is a crucial factor in the terminal maturation of autophagosomes and to mediate autophagosome-lysosome fusion. Positively regulates lysosome peripheral distribution and ruffled border formation in osteoclasts. May be involved in negative regulation of endocytic transport from early endosome to late endosome/lysosome implicating its association with Rab7. May have a role in sialyl-lex-mediated transduction of apoptotic signals. Involved in bone resorption. This Rattus norvegicus (Rat) protein is Pleckstrin homology domain-containing family M member 1.